Reading from the N-terminus, the 326-residue chain is tRNA U34 carboxymethyltransferase (326 aa).

7 residues coordinate carboxy-S-adenosyl-L-methionine: Lys-91, Trp-105, Lys-110, Gly-130, Met-196, Tyr-200, and Arg-315.

The protein belongs to the class I-like SAM-binding methyltransferase superfamily. CmoB family. Homotetramer.

The enzyme catalyses carboxy-S-adenosyl-L-methionine + 5-hydroxyuridine(34) in tRNA = 5-carboxymethoxyuridine(34) in tRNA + S-adenosyl-L-homocysteine + H(+). In terms of biological role, catalyzes carboxymethyl transfer from carboxy-S-adenosyl-L-methionine (Cx-SAM) to 5-hydroxyuridine (ho5U) to form 5-carboxymethoxyuridine (cmo5U) at position 34 in tRNAs. In Tolumonas auensis (strain DSM 9187 / NBRC 110442 / TA 4), this protein is tRNA U34 carboxymethyltransferase.